We begin with the raw amino-acid sequence, 157 residues long: MGIIDFLLALMQDMILSAIPAVGFAMVFNVPHRALPWCALLGALGHGLRMLMMSAGFNIEWSTFMASLLVGSIGIQWSRWYLAHPKVFTVAAVIPMFPGISAYTAMISAVKISHLGYSEPMMITLLTNFLKASSIVGALSIGLSVPGLWLYRKRPRV.

5 helical membrane-spanning segments follow: residues 8–28, 34–54, 55–75, 87–107, and 129–149; these read LALM…AMVF, ALPW…LMMS, AGFN…SIGI, VFTV…TAMI, and FLKA…PGLW.

The protein belongs to the ThrE exporter (TC 2.A.79) family. In terms of assembly, the transporter is composed of YjjB and YjjP.

It localises to the cell inner membrane. Functionally, involved in succinate export with YjjP. Both proteins are required for export. This chain is Probable succinate transporter subunit YjjB, found in Salmonella typhi.